Reading from the N-terminus, the 1343-residue chain is MGLEAQRLPGAEEAPVRVALRVRPLLPKELLHGHQSCLQVEPGLGRVTLGRDRHFGFHVVLAEDAGQEAVYQACVQPLLEAFFEGFNATVFAYGQTGSGKTYTMGEASVASLLEDEQGIVPRAMAEAFKLIDENDLLDCLVHVSYLEVYKEEFRDLLEVGTASRDIQLREDERGNVVLCGVKEVDVEGLDEVLSLLEMGNAARHTGATHLNHLSSRSHTVFTVTLEQRGRAPSRLPRPAPGQLLVSKFHFVDLAGSERVLKTGSTGERLKESIQINSSLLALGNVISALGDPQRRGSHIPYRDSKITRILKDSLGGNAKTVMIACVSPSSSDFDETLNTLNYASRAQNIRNRATVNWRPEAERPPEETASGARGPPRHRSETRIIHRGRRAPGPATASAAAAMRLGAECARYRACTDAAYSLLRELQAEPGLPGAAARKVRDWLCAVEGERSALSSASGPDSGIESASVEDQAAQGAGGRKEDEGAQQLLTLQNQVARLEEENRDFLAALEDAMEQYKLQSDRLREQQEEMVELRLRLELVRPGWGGPRLLNGLPPGSFVPRPHTAPLGGAHAHVLGMVPPACLPGDEVGSEQRGEQVTNGREAGAELLTEVNRLGSGSSAASEEEEEEEEPPRRTLHLRRNRISNCSQRAGARPGSLPERKGPELCLEELDAAIPGSRAVGGSKARVQARQVPPATASEWRLAQAQQKIRELAINIRMKEELIGELVRTGKAAQALNRQHSQRIRELEQEAEQVRAELSEGQRQLRELEGKELQDAGERSRLQEFRRRVAAAQSQVQVLKEKKQATERLVSLSAQSEKRLQELERNVQLMRQQQGQLQRRLREETEQKRRLEAEMSKRQHRVKELELKHEQQQKILKIKTEEIAAFQRKRRSGSNGSVVSLEQQQKIEEQKKWLDQEMEKVLQQRRALEELGEELHKREAILAKKEALMQEKTGLESKRLRSSQALNEDIVRVSSRLEHLEKELSEKSGQLRQGSAQSQQQIRGEIDSLRQEKDSLLKQRLEIDGKLRQGSLLSPEEERTLFQLDEAIEALDAAIEYKNEAITCRQRVLRASASLLSQCEMNLMAKLSYLSSSETRALLCKYFDKVVTLREEQHQQQIAFSELEMQLEEQQRLVYWLEVALERQRLEMDRQLTLQQKEHEQNMQLLLQQSRDHLGEGLADSRRQYEARIQALEKELGRYMWINQELKQKLGGVNAVGHSRGGEKRSLCSEGRQAPGNEDELHLAPELLWLSPLTEGAPRTREETRDLVHAPLPLTWKRSSLCGEEQGSPEELRQREAAEPLVGRVLPVGEAGLPWNFGPLSKPRRELRRASPGMIDVRKNPL.

Residues 15 to 349 (PVRVALRVRP…LNYASRAQNI (335 aa)) form the Kinesin motor domain. 94-101 (GQTGSGKT) is a binding site for ATP. 3 disordered regions span residues 356 to 382 (NWRP…RSET), 451 to 483 (RSAL…RKED), and 611 to 639 (EVNR…TLHL). The tract at residues 358 to 479 (RPEAERPPEE…EDQAAQGAGG (122 aa)) is interaction with DLG5. The tract at residues 358-1206 (RPEAERPPEE…LGRYMWINQE (849 aa)) is interaction with SMO. The stretch at 480–542 (RKEDEGAQQL…ELRLRLELVR (63 aa)) forms a coiled coil. The interval 513 to 775 (AMEQYKLQSD…LRELEGKELQ (263 aa)) is sufficient for interaction with NPHP1. Coiled-coil stretches lie at residues 698 to 1057 (ASEW…AAIE) and 1109 to 1211 (TLRE…KQKL). Ser-898 is modified (phosphoserine). 2 disordered regions span residues 1219–1238 (HSRG…APGN) and 1310–1343 (GEAG…KNPL).

It belongs to the TRAFAC class myosin-kinesin ATPase superfamily. Kinesin family. KIF27 subfamily. As to quaternary structure, can form homodimers and interacts with microtubules. Interacts with GLI1, GLI2, GLI3, SMO and SUFU. Interacts with NPHP1. Interacts with SMO and DLG5 (via PDZ4 or guanylate kinase-like domain). Post-translationally, polyubiquitinated by UBR3. As to expression, embryonic stem cells, melanotic melanoma and Jurkat T-cells. Expressed in heart, lung, liver, kidney, testis, retina, placenta, pancreas, colon, small intestin, prostate and thymus.

The protein localises to the cell projection. It is found in the cilium. It localises to the cytoplasm. The protein resides in the cytoskeleton. Its subcellular location is the cilium basal body. In terms of biological role, essential for hedgehog signaling regulation: acts both as a negative and positive regulator of sonic hedgehog (Shh) and Indian hedgehog (Ihh) pathways, acting downstream of SMO, through both SUFU-dependent and -independent mechanisms. Involved in the regulation of microtubular dynamics. Required for proper organization of the ciliary tip and control of ciliary localization of SUFU-GLI2 complexes. Required for localization of GLI3 to cilia in response to Shh. Negatively regulates Shh signaling by preventing inappropriate activation of the transcriptional activator GLI2 in the absence of ligand. Positively regulates Shh signaling by preventing the processing of the transcription factor GLI3 into its repressor form. In keratinocytes, promotes the dissociation of SUFU-GLI2 complexes, GLI2 nuclear translocation and Shh signaling activation. Involved in the regulation of epidermal differentiation and chondrocyte development. The polypeptide is Kinesin-like protein KIF7 (KIF7) (Homo sapiens (Human)).